The sequence spans 478 residues: Divinyl ether synthase CYP74D3 (478 aa).

Residue C432 participates in heme binding.

This sequence belongs to the cytochrome P450 family. 9-divinyl ether synthase subfamily. As to expression, not detected in leaves, stems or roots of healthy plants.

It localises to the cytoplasm. Its subcellular location is the cytosol. The enzyme catalyses (9S)-hydroperoxy-(10E,12Z)-octadecadienoate = colneleate + H2O. The catalysed reaction is (9S)-hydroperoxy-(10E,12Z,15Z)-octadecatrienoate = colnelenate + H2O. In terms of biological role, strictly inducible cytochrome P450 involved in the biosynthesis of the anti-fungal toxins colneleate and colnelenate. Can use (9S)-hydroperoxy-(10E,12Z)-octadecadienoate (9-HPOD) and (9S)-hydroperoxy-(10E,12Z,15Z)-octadecatrienoate (9-HPOT) as substrates, but has a very low activity with the corresponding 13-hydroperoxides (13-HPOD and 13-POT). The protein is Divinyl ether synthase CYP74D3 of Nicotiana tabacum (Common tobacco).